The sequence spans 154 residues: Transcriptional repressor NrdR (154 aa).

Residues 3–34 (CPFCGAEDTAVADTRLNDEADVVRRRRKCNAC) fold into a zinc finger. Positions 49-139 (PQVVKKNGLR…VYRNFEDVDA (91 aa)) constitute an ATP-cone domain.

It belongs to the NrdR family. Requires Zn(2+) as cofactor.

Functionally, negatively regulates transcription of bacterial ribonucleotide reductase nrd genes and operons by binding to NrdR-boxes. The polypeptide is Transcriptional repressor NrdR (Dechloromonas aromatica (strain RCB)).